The primary structure comprises 945 residues: Xylosyltransferase 1 (945 aa).

The Cytoplasmic segment spans residues 1 to 17; that stretch reads MQAAPCARRLARRSHSA. Residues 18–38 form a helical; Signal-anchor for type II membrane protein membrane-spanning segment; the sequence is LLAALTVLLLQTLVVWNFSSL. Topologically, residues 39–945 are lumenal; it reads DSGAGERRGG…GAVKPDGRLR (907 aa). Residues 42 to 245 are disordered; it reads AGERRGGAAV…KYDQPPKCDI (204 aa). A compositionally biased stretch (gly residues) spans 76-103; the sequence is RGGGGGGGGCGGGGRGPQARARGGGPGE. Over residues 131–147 the composition is skewed to basic and acidic residues; sequence KVRTDSNNENSVPKDFE. Polar residues predominate over residues 149–158; the sequence is VDNSNFAPRT. Over residues 163-190 the composition is skewed to basic and acidic residues; that stretch reads HQPELAKKPPSRQKELLKRKLEQQEKGK. The N-linked (GlcNAc...) asparagine glycan is linked to N212. A compositionally biased stretch (basic and acidic residues) spans 235 to 245; it reads TKYDQPPKCDI. 4 disulfide bridges follow: C243–C271, C287–C528, C547–C560, and C549–C558. Residues V319, D347, and 376 to 378 each bind UDP-alpha-D-xylose; that span reads TIW. N-linked (GlcNAc...) asparagine glycosylation is present at N407. 480-481 contacts UDP-alpha-D-xylose; that stretch reads DW. UDP-alpha-D-xylose-binding positions include S561 and 584-585; that span reads RK. 2 disulfide bridges follow: C661/C913 and C906/C919. N-linked (GlcNAc...) asparagine glycosylation occurs at N763. A disordered region spans residues 926–945; sequence SFSPDPKSELGAVKPDGRLR.

Belongs to the glycosyltransferase 14 family. XylT subfamily. In terms of assembly, monomer. A divalent metal cation serves as cofactor. Post-translationally, contains 7 disulfide bonds. In terms of processing, N-glycosylated.

The protein localises to the golgi apparatus membrane. The enzyme catalyses UDP-alpha-D-xylose + L-seryl-[protein] = 3-O-(beta-D-xylosyl)-L-seryl-[protein] + UDP + H(+). It functions in the pathway glycan metabolism; chondroitin sulfate biosynthesis. The protein operates within glycan metabolism; heparan sulfate biosynthesis. In terms of biological role, catalyzes the first step in the biosynthesis of chondroitin sulfate and dermatan sulfate proteoglycans, such as DCN. Transfers D-xylose from UDP-D-xylose to specific serine residues of the core protein. Required for normal maturation of chondrocytes during bone development, normal onset of ossification and normal embryonic and postnatal skeleton development, especially of the long bones. This chain is Xylosyltransferase 1 (XYLT1), found in Pan troglodytes (Chimpanzee).